Consider the following 135-residue polypeptide: ATP synthase epsilon chain, chloroplastic (135 aa).

Belongs to the ATPase epsilon chain family. F-type ATPases have 2 components, CF(1) - the catalytic core - and CF(0) - the membrane proton channel. CF(1) has five subunits: alpha(3), beta(3), gamma(1), delta(1), epsilon(1). CF(0) has three main subunits: a, b and c.

Its subcellular location is the plastid. The protein resides in the chloroplast thylakoid membrane. Functionally, produces ATP from ADP in the presence of a proton gradient across the membrane. The chain is ATP synthase epsilon chain, chloroplastic from Euglena gracilis.